The chain runs to 621 residues: Chaperone protein HtpG (621 aa).

The interval 1–328 is a; substrate-binding; it reads MTQEKKKFDA…SEDLPLNISR (328 aa). The interval 329-544 is b; it reads ESLQHNNVLE…DTAMDIRMER (216 aa). The segment at 545–621 is c; that stretch reads FLIEQKQIAS…LNDILQKAIL (77 aa).

This sequence belongs to the heat shock protein 90 family. In terms of assembly, homodimer.

The protein resides in the cytoplasm. Functionally, molecular chaperone. Has ATPase activity. This chain is Chaperone protein HtpG, found in Rickettsia typhi (strain ATCC VR-144 / Wilmington).